Here is a 118-residue protein sequence, read N- to C-terminus: Putative pterin-4-alpha-carbinolamine dehydratase (118 aa).

It belongs to the pterin-4-alpha-carbinolamine dehydratase family.

The catalysed reaction is (4aS,6R)-4a-hydroxy-L-erythro-5,6,7,8-tetrahydrobiopterin = (6R)-L-erythro-6,7-dihydrobiopterin + H2O. The sequence is that of Putative pterin-4-alpha-carbinolamine dehydratase from Xanthomonas campestris pv. campestris (strain 8004).